Consider the following 228-residue polypeptide: Endolytic peptidoglycan transglycosylase RlpA (228 aa).

The N-terminal stretch at 1-23 (MIQRHKLIVLIFLLIFCLSGCNT) is a signal peptide.

It belongs to the RlpA family.

Functionally, lytic transglycosylase with a strong preference for naked glycan strands that lack stem peptides. The sequence is that of Endolytic peptidoglycan transglycosylase RlpA from Rickettsia felis (strain ATCC VR-1525 / URRWXCal2) (Rickettsia azadi).